A 140-amino-acid chain; its full sequence is Putative pre-16S rRNA nuclease (140 aa).

It belongs to the YqgF nuclease family.

It localises to the cytoplasm. In terms of biological role, could be a nuclease involved in processing of the 5'-end of pre-16S rRNA. The polypeptide is Putative pre-16S rRNA nuclease (Aeromonas salmonicida (strain A449)).